Reading from the N-terminus, the 390-residue chain is Flavohemoprotein (390 aa).

Ser-2 is subject to N-acetylserine. Residues 12–149 (PLTPTEINFL…LAQTLIDAEA (138 aa)) enclose the Globin domain. His-96 provides a ligand contact to heme b. Catalysis depends on charge relay system residues Tyr-106 and Glu-148. The tract at residues 157–390 (WEEFKDFRVT…EFFGPTDPDC (234 aa)) is reductase. Positions 158–263 (EEFKDFRVTK…HAPVGTMKYD (106 aa)) constitute an FAD-binding FR-type domain. Residues Tyr-196 and 214 to 217 (REYS) contribute to the FAD site. 277-282 (GIGITP) serves as a coordination point for NADP(+). FAD is bound at residue 382 to 385 (FFGP).

It belongs to the globin family. Two-domain flavohemoproteins subfamily. In the C-terminal section; belongs to the flavoprotein pyridine nucleotide cytochrome reductase family. FAD serves as cofactor. It depends on heme b as a cofactor.

It is found in the cytoplasm. The catalysed reaction is 2 nitric oxide + NADPH + 2 O2 = 2 nitrate + NADP(+) + H(+). It carries out the reaction 2 nitric oxide + NADH + 2 O2 = 2 nitrate + NAD(+) + H(+). Its function is as follows. Is involved in NO detoxification in an aerobic process, termed nitric oxide dioxygenase (NOD) reaction that utilizes O(2) and NAD(P)H to convert NO to nitrate, which protects the fungus from various noxious nitrogen compounds. Therefore, plays a central role in the inducible response to nitrosative stress. In the presence of oxygen and NADH, it has NADH oxidase activity, which leads to the generation of superoxide and H(2)O(2). Under anaerobic conditions, it also exhibits nitric oxide reductase and FAD reductase activities. However, all these reactions are much lower than NOD activity. This chain is Flavohemoprotein, found in Candida norvegensis (Yeast).